The sequence spans 362 residues: Sphingosine 1-phosphate receptor 1 (362 aa).

At 1 to 25 (MDDLIARHYNFTGKFRKVHKDPGLK) the chain is on the extracellular side. N-linked (GlcNAc...) asparagine glycosylation occurs at Asn10. The helical transmembrane segment at 26–47 (ADSVVFIIVCCFIILENVLVLL) threads the bilayer. Residues 48–61 (TIWRTKKFHKPMYY) are Cytoplasmic-facing. The chain crosses the membrane as a helical span at residues 62–83 (FIGNLALSDLLAGVVYTANILL). The Extracellular segment spans residues 84–95 (SGANTYKLTPTQ). The helical transmembrane segment at 96–117 (WFFREGSMFVALAASVFSLLAI) threads the bilayer. A sphing-4-enine 1-phosphate-binding site is contributed by 99 to 100 (RE). At 118 to 139 (AIERHLTMLKMKLHNNGKTCRV) the chain is on the cytoplasmic side. Residues 140–161 (FMLISTVWFIAAILGGLPVMGW) form a helical membrane-spanning segment. Residues 162–175 (NCIDSMNNCSTVLP) are Extracellular-facing. A disulfide bond links Cys163 and Cys170. A glycan (N-linked (GlcNAc...) asparagine) is linked at Asn169. A helical transmembrane segment spans residues 176–203 (LYHKAYILFCTTVFSVILMAIVILYARI). At 204–238 (YALVRTRSRKLVFRKVANGRGSNKSSEKSMALLKT) the chain is on the cytoplasmic side. The helical transmembrane segment at 239-259 (VIIVLSCFIACWAPLFILLLL) threads the bilayer. A sphing-4-enine 1-phosphate-binding site is contributed by 246–250 (FIACW). The Extracellular portion of the chain corresponds to 260 to 270 (DVACQTLTCSI). Cys263 and Cys268 form a disulfide bridge. A helical membrane pass occupies residues 271 to 291 (LYKAEWFLALAVLNSAMNPLI). At 292–362 (YTLTSNEMRR…VSSGNITSSS (71 aa)) the chain is on the cytoplasmic side. Cys309 is lipidated: S-palmitoyl cysteine. The interval 328–362 (FSRSKSDNSSHPNKDEPEYSPRETIVSSGNITSSS) is disordered. Positions 329-348 (SRSKSDNSSHPNKDEPEYSP) are enriched in basic and acidic residues. Over residues 352 to 362 (IVSSGNITSSS) the composition is skewed to polar residues.

This sequence belongs to the G-protein coupled receptor 1 family.

The protein localises to the cell membrane. Functionally, G-protein coupled receptor for the bioactive lysosphingolipid sphingosine 1-phosphate (S1P) that seems to be coupled to the G(i) subclass of heteromeric G proteins. Signaling leads to the activation of RAC1, SRC, PTK2/FAK1 and MAP kinases. Plays an important role in cell migration, probably via its role in the reorganization of the actin cytoskeleton and the formation of lamellipodia in response to stimuli that increase the activity of the sphingosine kinase SPHK1. Required for normal chemotaxis toward sphingosine 1-phosphate. This Danio rerio (Zebrafish) protein is Sphingosine 1-phosphate receptor 1 (s1pr1).